The primary structure comprises 86 residues: Cell division protein ZapA (86 aa).

It belongs to the ZapA family. Type 2 subfamily. Homodimer. Interacts with FtsZ.

It localises to the cytoplasm. Functionally, activator of cell division through the inhibition of FtsZ GTPase activity, therefore promoting FtsZ assembly into bundles of protofilaments necessary for the formation of the division Z ring. It is recruited early at mid-cell but it is not essential for cell division. The polypeptide is Cell division protein ZapA (Oceanobacillus iheyensis (strain DSM 14371 / CIP 107618 / JCM 11309 / KCTC 3954 / HTE831)).